The following is a 367-amino-acid chain: Methylthioribose-1-phosphate isomerase (367 aa).

Substrate-binding positions include Arg-54–Ala-56, Arg-91, and Gln-201. Asp-242 (proton donor) is an active-site residue. Asn-252–Lys-253 is a binding site for substrate.

It belongs to the eIF-2B alpha/beta/delta subunits family. MtnA subfamily.

It catalyses the reaction 5-(methylsulfanyl)-alpha-D-ribose 1-phosphate = 5-(methylsulfanyl)-D-ribulose 1-phosphate. It functions in the pathway amino-acid biosynthesis; L-methionine biosynthesis via salvage pathway; L-methionine from S-methyl-5-thio-alpha-D-ribose 1-phosphate: step 1/6. Catalyzes the interconversion of methylthioribose-1-phosphate (MTR-1-P) into methylthioribulose-1-phosphate (MTRu-1-P). In Acidiphilium cryptum (strain JF-5), this protein is Methylthioribose-1-phosphate isomerase.